The primary structure comprises 637 residues: Acetolactate synthase 2, chloroplastic (637 aa).

A chloroplast-targeting transit peptide spans 1 to 73; that stretch reads MASFSFFGTI…SSKYAPNVPR (73 aa). The disordered stretch occupies residues 35-69; that stretch reads RRATRVSVSANSKKDQDRTASRRENPSTFSSKYAP. Positions 46-59 are enriched in basic and acidic residues; sequence SKKDQDRTASRREN. Glutamate 120 serves as a coordination point for thiamine diphosphate. FAD is bound by residues arginine 222, 329–350, and 372–391; these read HGTV…FGVR and DIDS…VCCD. Positions 462–542 are thiamine pyrophosphate binding; the sequence is QHQMWAAQFY…VKVLLINNQH (81 aa). Residues aspartate 513 and asparagine 540 each coordinate Mg(2+).

It belongs to the TPP enzyme family. It depends on Mg(2+) as a cofactor. The cofactor is thiamine diphosphate.

It is found in the plastid. Its subcellular location is the chloroplast. It catalyses the reaction 2 pyruvate + H(+) = (2S)-2-acetolactate + CO2. The protein operates within amino-acid biosynthesis; L-isoleucine biosynthesis; L-isoleucine from 2-oxobutanoate: step 1/4. It participates in amino-acid biosynthesis; L-valine biosynthesis; L-valine from pyruvate: step 1/4. In Brassica napus (Rape), this protein is Acetolactate synthase 2, chloroplastic.